A 183-amino-acid polypeptide reads, in one-letter code: Senescence-associated protein DIN1 (183 aa).

Residues 83–183 (AQAGYKHLDV…WTENELPVEE (101 aa)) form the Rhodanese domain.

Functionally, is thought to act during the early stages of leaf senescence. The chain is Senescence-associated protein DIN1 (DIN1) from Raphanus sativus (Radish).